We begin with the raw amino-acid sequence, 95 residues long: Protein TusB (95 aa).

It belongs to the DsrH/TusB family. As to quaternary structure, heterohexamer, formed by a dimer of trimers. The hexameric TusBCD complex contains 2 copies each of TusB, TusC and TusD. The TusBCD complex interacts with TusE.

The protein localises to the cytoplasm. Part of a sulfur-relay system required for 2-thiolation of 5-methylaminomethyl-2-thiouridine (mnm(5)s(2)U) at tRNA wobble positions. In Shigella flexneri, this protein is Protein TusB.